The chain runs to 331 residues: Peroxisomal nicotinamide adenine dinucleotide carrier (331 aa).

Solcar repeat units follow at residues 2–91 (SDAL…FRNR), 109–216 (VGMF…MLTK), and 229–320 (VTAL…LVKG). 6 helical membrane-spanning segments follow: residues 5–25 (LING…TYPL), 63–85 (LYGG…YYFY), 116–136 (LVAA…WVIV), 180–200 (VYDE…LIMV), 235–255 (FLLG…LLVV), and 293–313 (YKGM…LFMI).

Belongs to the mitochondrial carrier (TC 2.A.29) family. In terms of assembly, homodimer. As to expression, expressed in cotyledons, hypocotyls, vascular tissues, trichomes, hydathodes, seeds, pedicels, flowers and stigma.

Its subcellular location is the glyoxysome membrane. With respect to regulation, inhibited by pyridoxal 5'-phosphate, bathophenanthroline, tannic acid, mersalyl, mercuric chloride and bromocresol purple. In terms of biological role, mediates the NAD(+) import into peroxisomes. Favors the NAD(+)(in)/AMP(out) antiport exchange, but is also able to catalyze a low unidirectional transport that might be essential under special conditions. Transports CoA, dephospho-CoA, acetyl-CoA, adenosine 3',5'-diphosphate (PAP), NAD(+), AMP, ADP and NADH, but has no activity with ATP, GTP, GDP, NADPH, NADP(+) or FAD. Required for peroxisomes proliferation. This is Peroxisomal nicotinamide adenine dinucleotide carrier (PXN) from Arabidopsis thaliana (Mouse-ear cress).